Here is a 711-residue protein sequence, read N- to C-terminus: Triacylglycerol hydrolase DDHD2 (711 aa).

Residues 1–24 (MSSVQSQQEQLSQSDPSPSPNSCS) form a disordered region. In terms of domain architecture, WWE spans 30–112 (DMDAGSLYEP…WDELASEVRR (83 aa)). Ser-351 acts as the Nucleophile in catalysis. The SAM domain occupies 385–448 (GDTPTLEEDL…NYFSTRKNSM (64 aa)). Ser-447 is modified (phosphoserine). 2 disordered regions span residues 449–470 (GIKR…SEFC) and 609–638 (LQAS…EETS). Residues 495 to 700 (LIYKPEIFFA…VLLVLKEIYQ (206 aa)) enclose the DDHD domain. Residues 614–624 (TPEETEAEPES) show a composition bias toward acidic residues.

It belongs to the PA-PLA1 family. In terms of assembly, forms homooligomers and, to a much smaller extent, heterooligomers with DDHD1. As to expression, widely expressed (at protein level).

The protein resides in the cytoplasm. Its subcellular location is the cytosol. It localises to the endoplasmic reticulum-Golgi intermediate compartment. It is found in the golgi apparatus. The protein localises to the cis-Golgi network. The enzyme catalyses a triacylglycerol + H2O = a diacylglycerol + a fatty acid + H(+). It carries out the reaction a diacylglycerol + H2O = a monoacylglycerol + a fatty acid + H(+). The catalysed reaction is a 1,3-diacylglycerol + H2O = a 1-acylglycerol + a fatty acid + H(+). It catalyses the reaction a 1-acylglycerol + H2O = glycerol + a fatty acid + H(+). The enzyme catalyses 1,2,3-tri-(9Z-octadecenoyl)-glycerol + H2O = di-(9Z)-octadecenoylglycerol + (9Z)-octadecenoate + H(+). It carries out the reaction di-(9Z)-octadecenoylglycerol + H2O = (9Z-octadecenoyl)-glycerol + (9Z)-octadecenoate + H(+). The catalysed reaction is 1,3-di-(9Z-octadecenoyl)-glycerol + H2O = 1-(9Z-octadecenoyl)-glycerol + (9Z)-octadecenoate + H(+). It catalyses the reaction trihexadecanoylglycerol + H2O = dihexadecanoylglycerol + hexadecanoate + H(+). The enzyme catalyses 1,2-di-(9Z-octadecenoyl)-sn-glycero-3-phosphocholine + H2O = (9Z-octadecenoyl)-sn-glycero-3-phosphocholine + (9Z)-octadecenoate + H(+). It carries out the reaction 1-(9Z-octadecenoyl)-glycerol + H2O = glycerol + (9Z)-octadecenoate + H(+). The catalysed reaction is 1,2-di-(9Z-octadecenoyl)-sn-glycero-3-phosphate + H2O = 2-(9Z-octadecenoyl)-sn-glycero-3-phosphate + (9Z)-octadecenoate + H(+). It catalyses the reaction 1-hexadecanoyl-2-(9Z-octadecenoyl)-sn-glycero-3-phosphate + H2O = 2-(9Z-octadecenoyl)-sn-glycero-3-phosphate + hexadecanoate + H(+). The enzyme catalyses 1-hexadecanoyl-2-(9Z-octadecenoyl)-sn-glycero-3-phosphoethanolamine + H2O = 2-(9Z-octadecenoyl)-sn-glycero-3-phosphoethanolamine + hexadecanoate + H(+). It carries out the reaction 1-hexadecanoyl-2-(9Z-octadecenoyl)-sn-glycero-3-phospho-L-serine + H2O = 2-(9Z-octadecenoyl)-sn-glycero-3-phospho-L-serine + hexadecanoate + H(+). The catalysed reaction is 1-hexadecanoyl-2-(9Z-octadecenoyl)-sn-glycero-3-phosphocholine + H2O = 2-(9Z-octadecenoyl)-sn-glycero-3-phosphocholine + hexadecanoate + H(+). Functionally, diacylglycerol (DAG) and triacylglycerol (TAG) lipase required for proper lipid homeostasis in the central nervous system. It cooperates with PNPLA2/ATGL in neuronal TAG catabolism and hydrolyzes sn-1,3 DAG downstream of PNPLA2/ATGL. In vitro, it also acts as a phospholipase that hydrolyzes preferentially phosphatidic acids, including 1,2-dioleoyl-sn-phosphatidic acid, phosphatidylcholine and phosphatidylethanolamine. Specifically binds to phosphatidylinositol 3-phosphate (PI(3)P), phosphatidylinositol 4-phosphate (PI(4)P), phosphatidylinositol 5-phosphate (PI(5)P) and possibly phosphatidylinositol 4,5-bisphosphate (PI(4,5)P2). May be involved in the maintenance of the endoplasmic reticulum and/or Golgi structures. May regulate the transport between Golgi apparatus and plasma membrane. This Homo sapiens (Human) protein is Triacylglycerol hydrolase DDHD2.